Here is a 93-residue protein sequence, read N- to C-terminus: Large ribosomal subunit protein uL23cz/uL23cy (93 aa).

Belongs to the universal ribosomal protein uL23 family. Part of the 50S ribosomal subunit.

Its subcellular location is the plastid. It localises to the chloroplast. Binds to 23S rRNA. The chain is Large ribosomal subunit protein uL23cz/uL23cy (rpl23-A) from Citrus sinensis (Sweet orange).